We begin with the raw amino-acid sequence, 85 residues long: Translation initiation factor IF-1 (85 aa).

The region spanning 1-72 (MAKEELIEMH…SKGRITFRHI (72 aa)) is the S1-like domain.

It belongs to the IF-1 family. As to quaternary structure, component of the 30S ribosomal translation pre-initiation complex which assembles on the 30S ribosome in the order IF-2 and IF-3, IF-1 and N-formylmethionyl-tRNA(fMet); mRNA recruitment can occur at any time during PIC assembly.

It is found in the cytoplasm. One of the essential components for the initiation of protein synthesis. Stabilizes the binding of IF-2 and IF-3 on the 30S subunit to which N-formylmethionyl-tRNA(fMet) subsequently binds. Helps modulate mRNA selection, yielding the 30S pre-initiation complex (PIC). Upon addition of the 50S ribosomal subunit IF-1, IF-2 and IF-3 are released leaving the mature 70S translation initiation complex. In Polaromonas naphthalenivorans (strain CJ2), this protein is Translation initiation factor IF-1.